The chain runs to 150 residues: Ribonuclease H (150 aa).

The RNase H type-1 domain occupies 1-141 (MKFIEVHTDG…VDVLARNQAI (141 aa)). Mg(2+)-binding residues include Asp9, Glu47, Asp69, and Asp133.

This sequence belongs to the RNase H family. Monomer. The cofactor is Mg(2+).

The protein localises to the cytoplasm. It catalyses the reaction Endonucleolytic cleavage to 5'-phosphomonoester.. Its function is as follows. Endonuclease that specifically degrades the RNA of RNA-DNA hybrids. The sequence is that of Ribonuclease H from Xanthomonas euvesicatoria pv. vesicatoria (strain 85-10) (Xanthomonas campestris pv. vesicatoria).